A 456-amino-acid polypeptide reads, in one-letter code: Adenylosuccinate lyase (456 aa).

N(6)-(1,2-dicarboxyethyl)-AMP-binding positions include 15–16, 90–92, and 122–123; these read RY, NHD, and TS. Histidine 171 functions as the Proton donor/acceptor in the catalytic mechanism. Glutamine 248 is a N(6)-(1,2-dicarboxyethyl)-AMP binding site. Serine 296 (proton donor/acceptor) is an active-site residue. Residues serine 297, 302-304, asparagine 310, arginine 336, and 341-345 each bind N(6)-(1,2-dicarboxyethyl)-AMP; these read KVN and STVLR.

It belongs to the lyase 1 family. Adenylosuccinate lyase subfamily. In terms of assembly, homotetramer.

The enzyme catalyses N(6)-(1,2-dicarboxyethyl)-AMP = fumarate + AMP. The catalysed reaction is (2S)-2-[5-amino-1-(5-phospho-beta-D-ribosyl)imidazole-4-carboxamido]succinate = 5-amino-1-(5-phospho-beta-D-ribosyl)imidazole-4-carboxamide + fumarate. It carries out the reaction (2S)-2-amino-2'-deoxyadenylo-succinate = dZMP + fumarate. It functions in the pathway purine metabolism; AMP biosynthesis via de novo pathway; AMP from IMP: step 2/2. The protein operates within purine metabolism; IMP biosynthesis via de novo pathway; 5-amino-1-(5-phospho-D-ribosyl)imidazole-4-carboxamide from 5-amino-1-(5-phospho-D-ribosyl)imidazole-4-carboxylate: step 2/2. Its pathway is purine metabolism. Catalyzes two reactions in de novo purine nucleotide biosynthesis. Catalyzes the breakdown of 5-aminoimidazole- (N-succinylocarboxamide) ribotide (SAICAR or 2-[5-amino-1-(5-phospho-beta-D-ribosyl)imidazole-4-carboxamido]succinate) to 5-aminoimidazole-4-carboxamide ribotide (AICAR or 5-amino-1-(5-phospho-beta-D-ribosyl)imidazole-4-carboxamide) and fumarate, and of adenylosuccinate (ADS or N(6)-(1,2-dicarboxyethyl)-AMP) to adenosine monophosphate (AMP) and fumarate. Functionally, (Microbial infection) Catalyzes the conversion of 2-amino-2'-deoxyadenylo-succinate to dZMP and fumarate, when the bacterium is infected by a phage that produces the substrate of this reaction, a step in the synthesis of dZTP (2-amino-2'-deoxyadenosine 5'-triphosphate), which is a nucleotide then used by the phage as a DNA polymerase substrate. The sequence is that of Adenylosuccinate lyase from Vibrio cholerae serotype O1 (strain ATCC 39541 / Classical Ogawa 395 / O395).